The sequence spans 2170 residues: Brefeldin A-inhibited guanine nucleotide-exchange protein 3 (2170 aa).

Ser471 carries the post-translational modification Phosphoserine. Disordered stretches follow at residues 489–547 (EHTP…MGKV) and 613–634 (AAEKDSGRSDVSDIGSDNCSLA). Positions 503-524 (ISISVTTDTGQTTLEGELGQTT) are enriched in polar residues. The 214-residue stretch at 579–792 (RTRSYGSRYS…EELYHQVLDR (214 aa)) folds into the SEC7 domain. Over residues 614-623 (AEKDSGRSDV) the composition is skewed to basic and acidic residues. 3 positions are modified to phosphoserine: Ser628, Ser632, and Ser1045. The chain crosses the membrane as a helical span at residues 1488–1508 (PGFGIYAVVHLLLPVMSLWLL). The segment at 1843 to 1872 (SSDSSQQCSSEDEDIFEETAQVSPPRGKEK) is disordered. The residue at position 1881 (Ser1881) is a Phosphoserine. Residues 1938-1955 (FQSESSTPSTGGFSGKNT) are compositionally biased toward polar residues. Disordered stretches follow at residues 1938–1997 (FQSE…RKKE) and 2024–2058 (KRRQPHNLPPFPKEVKVDKKGEPLGPRGPDSPLLQ). A compositionally biased stretch (basic and acidic residues) spans 1956-1966 (PSEDDRREHLS). Residues Ser1975 and Ser1984 each carry the phosphoserine modification. Composition is skewed to basic and acidic residues over residues 1986–1997 (KTEKKDPGRKKE) and 2036–2045 (KEVKVDKKGE). 5 positions are modified to phosphoserine: Ser2072, Ser2074, Ser2088, Ser2094, and Ser2096. The segment at 2078–2097 (ELLRQEKRPRSGSTGSSLSV) is disordered. Residues 2088-2097 (SGSTGSSLSV) show a composition bias toward low complexity.

As to quaternary structure, interacts with PHB2. In terms of tissue distribution, expressed in pancreatic islet (insulin granules of islet alpha and beta cells) and brain (at protein level).

It is found in the cytoplasmic vesicle. It localises to the secretory vesicle. The protein resides in the secretory vesicle membrane. In terms of biological role, participates in the regulation of systemic glucose homeostasis, where it negatively regulates insulin granule biogenesis in pancreatic islet beta cells. Also regulates glucagon granule production in pancreatic alpha cells. Inhibits nuclear translocation of the transcriptional coregulator PHB2 and may enhance estrogen receptor alpha (ESR1) transcriptional activity in breast cancer cells. The sequence is that of Brefeldin A-inhibited guanine nucleotide-exchange protein 3 from Mus musculus (Mouse).